A 31-amino-acid polypeptide reads, in one-letter code: U1-theraphotoxin-Cv1a (31 aa).

3 cysteine pairs are disulfide-bonded: C2–C16, C9–C21, and C15–C28.

Expressed by the venom gland.

It localises to the secreted. Its function is as follows. Insecticidal toxin that induces reversible paralysis in crickets but not in cockroaches and mice. Molecular target unknown. The protein is U1-theraphotoxin-Cv1a of Coremiocnemis valida (Singapore tarantula).